The chain runs to 242 residues: ATP synthase subunit a (242 aa).

A run of 5 helical transmembrane segments spans residues 21–41 (LSSI…AIIC), 83–103 (AVTL…FSIV), 117–137 (DATV…FYGI), 175–195 (LYGN…LFFN), and 198–218 (AWGW…SIFV).

It belongs to the ATPase A chain family. F-type ATPases have 2 components, CF(1) - the catalytic core - and CF(0) - the membrane proton channel. CF(1) has five subunits: alpha(3), beta(3), gamma(1), delta(1), epsilon(1). CF(0) has three main subunits: a(1), b(2) and c(9-12). The alpha and beta chains form an alternating ring which encloses part of the gamma chain. CF(1) is attached to CF(0) by a central stalk formed by the gamma and epsilon chains, while a peripheral stalk is formed by the delta and b chains.

It is found in the cell membrane. In terms of biological role, key component of the proton channel; it plays a direct role in the translocation of protons across the membrane. The sequence is that of ATP synthase subunit a from Staphylococcus aureus (strain Newman).